Consider the following 418-residue polypeptide: tRNA(Met) cytidine acetate ligase (418 aa).

ATP is bound by residues Gly-95, Asn-161, and Arg-186.

It belongs to the TmcAL family.

Its subcellular location is the cytoplasm. The catalysed reaction is cytidine(34) in elongator tRNA(Met) + acetate + ATP = N(4)-acetylcytidine(34) in elongator tRNA(Met) + AMP + diphosphate. Functionally, catalyzes the formation of N(4)-acetylcytidine (ac(4)C) at the wobble position of elongator tRNA(Met), using acetate and ATP as substrates. First activates an acetate ion to form acetyladenylate (Ac-AMP) and then transfers the acetyl group to tRNA to form ac(4)C34. The sequence is that of tRNA(Met) cytidine acetate ligase from Thermotoga maritima (strain ATCC 43589 / DSM 3109 / JCM 10099 / NBRC 100826 / MSB8).